A 211-amino-acid polypeptide reads, in one-letter code: tRNA (guanine-N(7)-)-methyltransferase (211 aa).

The S-adenosyl-L-methionine site is built by E44, D69, D96, and D118. Residue D118 is part of the active site. K122 contacts substrate. Residues 124-129 (KHEKRR) are interaction with RNA. Residues D154 and 191 to 194 (TEYE) contribute to the substrate site.

This sequence belongs to the class I-like SAM-binding methyltransferase superfamily. TrmB family.

It carries out the reaction guanosine(46) in tRNA + S-adenosyl-L-methionine = N(7)-methylguanosine(46) in tRNA + S-adenosyl-L-homocysteine. Its pathway is tRNA modification; N(7)-methylguanine-tRNA biosynthesis. Catalyzes the formation of N(7)-methylguanine at position 46 (m7G46) in tRNA. This is tRNA (guanine-N(7)-)-methyltransferase from Streptococcus pyogenes serotype M18 (strain MGAS8232).